Here is a 183-residue protein sequence, read N- to C-terminus: uncharacterized protein (183 aa).

The segment covering 105 to 149 has biased composition (low complexity); the sequence is YNTNNSNTNTNYNNNNNNNNNNNNNNNNNNNKNNNNNNNNNNSNS. The interval 105–151 is disordered; sequence YNTNNSNTNTNYNNNNNNNNNNNNNNNNNNNKNNNNNNNNNNSNSKI.

This is an uncharacterized protein from Dictyostelium discoideum (Social amoeba).